A 597-amino-acid chain; its full sequence is Gamma-terpinene synthase, chloroplastic (597 aa).

The transit peptide at methionine 1–serine 47 directs the protein to the chloroplast. 2 residues coordinate Mn(2+): aspartate 350 and aspartate 354. Residues aspartate 350 to aspartate 354 carry the DDXXD motif motif. Homodimerization stretches follow at residues tyrosine 356–leucine 362 and glutamate 428–leucine 464. The Mn(2+) site is built by aspartate 494 and glutamate 502.

This sequence belongs to the terpene synthase family. Homodimer. Requires Mn(2+) as cofactor. Mg(2+) serves as cofactor.

The protein localises to the plastid. Its subcellular location is the chloroplast. It carries out the reaction (2E)-geranyl diphosphate = gamma-terpinene + diphosphate. Its pathway is secondary metabolite biosynthesis; terpenoid biosynthesis. Functionally, involved in the biosynthesis of phenolic monoterpenes natural products thymol and carvacrol which have a broad range of biological activities acting as antimicrobial compounds, insecticides, antioxidants and pharmaceutical agents. Monoterpene synthase which catalyzes the conversion of geranyl diphosphate (GPP) to gamma-terpinene and minor amounts of other monoterpenes (e.g. alpha-thujene, alpha-terpinene, myrcene, sabinene, (+)-R-limonene, alpha-pinene and alpha-phellandrene). In Thymus caespititius (Cretan thyme), this protein is Gamma-terpinene synthase, chloroplastic.